The primary structure comprises 410 residues: LL-diaminopimelate aminotransferase (410 aa).

Residues Tyr-15 and Gly-42 each coordinate substrate. Pyridoxal 5'-phosphate-binding positions include Tyr-72, 108-109, Tyr-132, Asn-187, Tyr-218, and 246-248; these read SK and SFS. Substrate contacts are provided by Lys-109, Tyr-132, and Asn-187. Position 249 is an N6-(pyridoxal phosphate)lysine (Lys-249). Pyridoxal 5'-phosphate-binding residues include Arg-257 and Asn-292. Substrate-binding residues include Asn-292 and Arg-388.

The protein belongs to the class-I pyridoxal-phosphate-dependent aminotransferase family. LL-diaminopimelate aminotransferase subfamily. Homodimer. The cofactor is pyridoxal 5'-phosphate.

It catalyses the reaction (2S,6S)-2,6-diaminopimelate + 2-oxoglutarate = (S)-2,3,4,5-tetrahydrodipicolinate + L-glutamate + H2O + H(+). It participates in amino-acid biosynthesis; L-lysine biosynthesis via DAP pathway; LL-2,6-diaminopimelate from (S)-tetrahydrodipicolinate (aminotransferase route): step 1/1. Functionally, involved in the synthesis of meso-diaminopimelate (m-DAP or DL-DAP), required for both lysine and peptidoglycan biosynthesis. Catalyzes the direct conversion of tetrahydrodipicolinate to LL-diaminopimelate. This Syntrophotalea carbinolica (strain DSM 2380 / NBRC 103641 / GraBd1) (Pelobacter carbinolicus) protein is LL-diaminopimelate aminotransferase.